A 341-amino-acid chain; its full sequence is UDP-3-O-acylglucosamine N-acyltransferase (341 aa).

His-240 acts as the Proton acceptor in catalysis.

It belongs to the transferase hexapeptide repeat family. LpxD subfamily. In terms of assembly, homotrimer.

The catalysed reaction is a UDP-3-O-[(3R)-3-hydroxyacyl]-alpha-D-glucosamine + a (3R)-hydroxyacyl-[ACP] = a UDP-2-N,3-O-bis[(3R)-3-hydroxyacyl]-alpha-D-glucosamine + holo-[ACP] + H(+). The protein operates within bacterial outer membrane biogenesis; LPS lipid A biosynthesis. Catalyzes the N-acylation of UDP-3-O-acylglucosamine using 3-hydroxyacyl-ACP as the acyl donor. Is involved in the biosynthesis of lipid A, a phosphorylated glycolipid that anchors the lipopolysaccharide to the outer membrane of the cell. The protein is UDP-3-O-acylglucosamine N-acyltransferase of Cellvibrio japonicus (strain Ueda107) (Pseudomonas fluorescens subsp. cellulosa).